Reading from the N-terminus, the 316-residue chain is Acetyl-coenzyme A carboxylase carboxyl transferase subunit beta (316 aa).

The CoA carboxyltransferase N-terminal domain maps to 29–298 (LWTKCPNCGV…LLSPLNSHHH (270 aa)). Zn(2+)-binding residues include cysteine 33, cysteine 36, cysteine 52, and cysteine 55. The C4-type zinc-finger motif lies at 33-55 (CPNCGVLAYTKDLLANQLVCLDC).

Belongs to the AccD/PCCB family. As to quaternary structure, acetyl-CoA carboxylase is a heterohexamer composed of biotin carboxyl carrier protein (AccB), biotin carboxylase (AccC) and two subunits each of ACCase subunit alpha (AccA) and ACCase subunit beta (AccD). The cofactor is Zn(2+).

It localises to the cytoplasm. It catalyses the reaction N(6)-carboxybiotinyl-L-lysyl-[protein] + acetyl-CoA = N(6)-biotinyl-L-lysyl-[protein] + malonyl-CoA. Its pathway is lipid metabolism; malonyl-CoA biosynthesis; malonyl-CoA from acetyl-CoA: step 1/1. Functionally, component of the acetyl coenzyme A carboxylase (ACC) complex. Biotin carboxylase (BC) catalyzes the carboxylation of biotin on its carrier protein (BCCP) and then the CO(2) group is transferred by the transcarboxylase to acetyl-CoA to form malonyl-CoA. In Microcystis aeruginosa (strain NIES-843 / IAM M-2473), this protein is Acetyl-coenzyme A carboxylase carboxyl transferase subunit beta.